The following is an 819-amino-acid chain: Lysine-specific demethylase JMJ18 (819 aa).

Positions M1–H39 are disordered. A compositionally biased stretch (basic and acidic residues) spans S8–I30. The 42-residue stretch at A59 to P100 folds into the JmjN domain. Residues T120 to F171 are disordered. The short motif at M130–R137 is the Nuclear localization signal element. The span at M130 to S154 shows a compositional bias: basic residues. Over residues G155–P165 the composition is skewed to low complexity. The region spanning Q261–S427 is the JmjC domain. Residues H307, E309, and H395 each contribute to the Fe cation site. C519, C522, C533, C535, C542, H545, C550, and C552 together coordinate Zn(2+). A C5HC2 zinc finger spans residues C519–L571. Residues A644–A702 form the FYR N-terminal domain. The 85-residue stretch at L704–K788 folds into the FYR C-terminal domain.

The protein belongs to the JARID1 histone demethylase family. Fe(2+) serves as cofactor. In terms of tissue distribution, expressed in vascular tissues of roots, cotyledons, leaves and flowers. Expressed predominantly in phloem companion cells of roots. Present in inflorescences, roots, siliques, leaves and stems.

Its subcellular location is the nucleus. It catalyses the reaction N(6),N(6),N(6)-trimethyl-L-lysyl(4)-[histone H3] + 2-oxoglutarate + O2 = N(6),N(6)-dimethyl-L-lysyl(4)-[histone H3] + formaldehyde + succinate + CO2. It carries out the reaction N(6),N(6)-dimethyl-L-lysyl(4)-[histone H3] + 2-oxoglutarate + O2 = N(6)-methyl-L-lysyl(4)-[histone H3] + formaldehyde + succinate + CO2. Its function is as follows. Histone demethylase that demethylates 'Lys-4' (H3K4me) of histone H3 with a specific activity for H3K4me3 and H3K4me2. No activity on H3K9me3/2, H3K27me3/2 and H3K36me3/2. Involved in the control of flowering time by demethylating H3K4me3 at the FLC locus and repressing its expression. The repression of FLC level and reduction in H3K4me3 at the FLC locus results in induction of the flowering activator FT, which is a downstream target of FLC. The sequence is that of Lysine-specific demethylase JMJ18 from Arabidopsis thaliana (Mouse-ear cress).